The sequence spans 66 residues: Large ribosomal subunit protein bL35 (66 aa).

This sequence belongs to the bacterial ribosomal protein bL35 family.

This Caulobacter vibrioides (strain ATCC 19089 / CIP 103742 / CB 15) (Caulobacter crescentus) protein is Large ribosomal subunit protein bL35.